The primary structure comprises 93 residues: Putative defensin-like protein 190 (93 aa).

An N-terminal signal peptide occupies residues 1–30 (MKMAKAAATNDFGFITCLVIFLVLAGISNG). Intrachain disulfides connect Cys39/Cys89, Cys55/Cys75, Cys60/Cys84, and Cys64/Cys86.

Belongs to the DEFL family.

It is found in the secreted. In Arabidopsis thaliana (Mouse-ear cress), this protein is Putative defensin-like protein 190.